A 345-amino-acid chain; its full sequence is Fibronectin type 3 and ankyrin repeat domains protein 1 (345 aa).

The Fibronectin type-III domain maps to 8-108 (PPSKPHPPVV…LVSVSTTREP (101 aa)). ANK repeat units lie at residues 109–139 (ISSE…KVDV), 143–172 (FGFT…DVNL), 176–205 (SGKD…SWQA), 209–238 (GGCT…EVDV), 243–273 (SGWT…NVNV), and 277–306 (NGKT…DASV).

Interacts with COPS5; regulates the phosphorylation of JUN and the transcriptional activity of AP-1. Interacts with RYBP; may prevent the ubiquitin-mediated proteasomal degradation of FANK1. In terms of processing, polyubiquitinated. Polyubiquitination leads to proteasomal degradation. As to expression, mostly restricted to testis.

It localises to the nucleus. The protein resides in the cytoplasm. The protein localises to the cytosol. It is found in the cytoskeleton. Its subcellular location is the cilium basal body. It localises to the cell projection. The protein resides in the cilium. Through the activation of JUN and AP-1-mediated transcription, may regulate apoptosis. The sequence is that of Fibronectin type 3 and ankyrin repeat domains protein 1 from Homo sapiens (Human).